The primary structure comprises 363 residues: Isopentenyl-diphosphate delta-isomerase (363 aa).

Substrate is bound at residue 15 to 16 (RK). Residues Ser-73, 74–76 (SMT), Ser-104, and Asn-133 each bind FMN. 104–106 (SMR) is a binding site for substrate. Gln-168 lines the substrate pocket. Glu-169 contributes to the Mg(2+) binding site. FMN is bound by residues Lys-200, Thr-230, and 313-314 (AG).

This sequence belongs to the IPP isomerase type 2 family. In terms of assembly, homooctamer. Dimer of tetramers. The cofactor is FMN. NADPH is required as a cofactor. Mg(2+) serves as cofactor.

It localises to the cytoplasm. It catalyses the reaction isopentenyl diphosphate = dimethylallyl diphosphate. Functionally, involved in the biosynthesis of isoprenoids. Catalyzes the 1,3-allylic rearrangement of the homoallylic substrate isopentenyl (IPP) to its allylic isomer, dimethylallyl diphosphate (DMAPP). This chain is Isopentenyl-diphosphate delta-isomerase, found in Chlorobium phaeobacteroides (strain DSM 266 / SMG 266 / 2430).